A 254-amino-acid chain; its full sequence is Sulfoacetaldehyde reductase (254 aa).

Residue 8–32 coordinates NADP(+); the sequence is FITGATSGFGEAAAQVFADAGWSLV. A substrate-binding site is contributed by Ser141. Tyr154 serves as the catalytic Proton acceptor.

It belongs to the short-chain dehydrogenases/reductases (SDR) family. Homodimer and heterotetramer.

It carries out the reaction 2-hydroxyethane-1-sulfonate + NADP(+) = sulfoacetaldehyde + NADPH + H(+). The protein operates within organosulfur degradation. Catalyzes the formation of isethionate from 2-sulfoacetaldehyde in the deaminative pathway of taurine. The enzyme is specific for NADPH; NADH is not a substrate. This is Sulfoacetaldehyde reductase (isfD) from Klebsiella oxytoca.